The chain runs to 163 residues: Acetolactate synthase small subunit (163 aa).

An ACT domain is found at 4–79 (ILSVLLENES…VFKVVNLSEQ (76 aa)).

The protein belongs to the acetolactate synthase small subunit family. As to quaternary structure, dimer of large and small chains.

It catalyses the reaction 2 pyruvate + H(+) = (2S)-2-acetolactate + CO2. The protein operates within amino-acid biosynthesis; L-isoleucine biosynthesis; L-isoleucine from 2-oxobutanoate: step 1/4. It functions in the pathway amino-acid biosynthesis; L-valine biosynthesis; L-valine from pyruvate: step 1/4. In Haemophilus influenzae (strain ATCC 51907 / DSM 11121 / KW20 / Rd), this protein is Acetolactate synthase small subunit (ilvH).